Consider the following 234-residue polypeptide: MKITWLGHSAFRIETSKSKILLDPFLSHNASFSGQDIKDVSAGITHILLTHGHGDHVGDTVALAKETGAVVLANADLAAWLGSKGVDRIEMGNTGGTVTFGGFSATFTNALHSSAQITEDGVSHALGNANGLMLHFDDEASIFAMGDTDIFSDMALINELHQPDIGFVPIGDRFTMGGAVAALACQRYFSFKTAIPCHYGTFPIIDQTADKFVAGMEGSKTQARAMKPAESLSI.

The protein belongs to the UPF0173 family.

The protein is UPF0173 metal-dependent hydrolase RHE_CH01853 of Rhizobium etli (strain ATCC 51251 / DSM 11541 / JCM 21823 / NBRC 15573 / CFN 42).